Reading from the N-terminus, the 671-residue chain is DNA ligase (671 aa).

Residues 32-36 (DAEYD), 81-82 (SL), and glutamate 113 contribute to the NAD(+) site. Lysine 115 (N6-AMP-lysine intermediate) is an active-site residue. The NAD(+) site is built by arginine 136, glutamate 173, lysine 290, and lysine 314. Residues cysteine 408, cysteine 411, cysteine 426, and cysteine 432 each coordinate Zn(2+). In terms of domain architecture, BRCT spans 593 to 671 (EIDSPFAGKT…EAEMIRLLGA (79 aa)).

The protein belongs to the NAD-dependent DNA ligase family. LigA subfamily. Mg(2+) is required as a cofactor. It depends on Mn(2+) as a cofactor.

The catalysed reaction is NAD(+) + (deoxyribonucleotide)n-3'-hydroxyl + 5'-phospho-(deoxyribonucleotide)m = (deoxyribonucleotide)n+m + AMP + beta-nicotinamide D-nucleotide.. In terms of biological role, DNA ligase that catalyzes the formation of phosphodiester linkages between 5'-phosphoryl and 3'-hydroxyl groups in double-stranded DNA using NAD as a coenzyme and as the energy source for the reaction. It is essential for DNA replication and repair of damaged DNA. This Salmonella paratyphi C (strain RKS4594) protein is DNA ligase.